The following is a 198-amino-acid chain: MVEKHLLEFLEKLQFLIAKNVKISHYGIENVKKICGVDIAYKGNLGFSVGVSMDINSGDYNYKSYVGEVNFPYIPGFLFMREAPLMIKAIEGLDCHLLLVDGHGIAHPRKSGIAAVIGVLLDFPTIGVAKSRLTGDLVNESEITYVYLNGEKVGVKFGRYFYSPGNKVDLQDCIELGKRGYPKVLKIADMLTKKTKKE.

2 residues coordinate Mg(2+): D38 and D101.

It belongs to the endonuclease V family. Mg(2+) serves as cofactor.

Its subcellular location is the cytoplasm. The catalysed reaction is Endonucleolytic cleavage at apurinic or apyrimidinic sites to products with a 5'-phosphate.. Functionally, DNA repair enzyme involved in the repair of deaminated bases. Selectively cleaves double-stranded DNA at the second phosphodiester bond 3' to a deoxyinosine leaving behind the intact lesion on the nicked DNA. The polypeptide is Endonuclease V (Saccharolobus islandicus (strain M.16.27) (Sulfolobus islandicus)).